Consider the following 125-residue polypeptide: SAGPFRIPKCRKEFQQAQHLRACQQWLHKQAMQSGSGPQGPQQRPPLLQQCCNELHQEEPLCVCPTLKGASRAVKQQVRQQQGQQGQQLQQVISRIYQTATHLPKVCNIPQVSVCPFQKTMPGPS.

4 disulfides stabilise this stretch: Cys10/Cys62, Cys23/Cys51, Cys52/Cys107, and Cys64/Cys115.

It belongs to the 2S seed storage albumins family. As to quaternary structure, the mature protein consists of a small and a large chain linked by disulfide bonds.

The small, basic, water-soluble napins are one of the two major kinds of storage proteins synthesized in the seed during its maturation. This chain is Napin-3, found in Brassica napus (Rape).